The sequence spans 557 residues: 2-succinyl-5-enolpyruvyl-6-hydroxy-3-cyclohexene-1-carboxylate synthase (557 aa).

Belongs to the TPP enzyme family. MenD subfamily. Homodimer. Mg(2+) is required as a cofactor. Mn(2+) serves as cofactor. It depends on thiamine diphosphate as a cofactor.

The enzyme catalyses isochorismate + 2-oxoglutarate + H(+) = 5-enolpyruvoyl-6-hydroxy-2-succinyl-cyclohex-3-ene-1-carboxylate + CO2. It participates in quinol/quinone metabolism; 1,4-dihydroxy-2-naphthoate biosynthesis; 1,4-dihydroxy-2-naphthoate from chorismate: step 2/7. Its pathway is quinol/quinone metabolism; menaquinone biosynthesis. Its function is as follows. Catalyzes the thiamine diphosphate-dependent decarboxylation of 2-oxoglutarate and the subsequent addition of the resulting succinic semialdehyde-thiamine pyrophosphate anion to isochorismate to yield 2-succinyl-5-enolpyruvyl-6-hydroxy-3-cyclohexene-1-carboxylate (SEPHCHC). The sequence is that of 2-succinyl-5-enolpyruvyl-6-hydroxy-3-cyclohexene-1-carboxylate synthase from Serratia proteamaculans (strain 568).